Here is a 1682-residue protein sequence, read N- to C-terminus: Collagen alpha-4(IV) chain (1682 aa).

Positions 1–32 (MRCFFRWTKSFVTAPWSLIFILFTIQYEYGSG) are cleaved as a signal peptide. The interval 31 to 56 (SGKKYGGPCGGRNCSVCQCFPEKGSR) is 7S domain. Asn43 carries N-linked (GlcNAc...) asparagine glycosylation. 2 disordered regions span residues 56 to 255 (RGHP…VQPP) and 379 to 1453 (PGPP…FGPG). The interval 57 to 1451 (GHPGPLGPQG…TGDPGPKGFG (1395 aa)) is triple-helical region. Residues 86–88 (RGD) carry the Cell attachment site motif. The span at 103-116 (PTGVPGFPGVDGVP) shows a compositional bias: low complexity. Asn134 carries an N-linked (GlcNAc...) asparagine glycan. 2 short sequence motifs (cell attachment site) span residues 137–139 (RGD) and 181–183 (RGD). Positions 396–410 (MGPPGPPGVPGPPGF) are enriched in pro residues. The segment covering 411 to 426 (PGEAGVPGRLDCAPGK) has biased composition (low complexity). Residues 487 to 500 (PPGPMGPPGPPGPP) show a composition bias toward pro residues. Basic and acidic residues predominate over residues 578–601 (DGGDGRPGERGDPGPRGDHKDAAP). Short sequence motifs (cell attachment site) lie at residues 587 to 589 (RGD) and 593 to 595 (RGD). Residues 609 to 621 (LPGPPGRTGPEGP) show a composition bias toward pro residues. A compositionally biased stretch (low complexity) spans 632–647 (QRGLPGEPGRPGTRGF). The N-linked (GlcNAc...) asparagine glycan is linked to Asn661. The segment covering 665 to 682 (PGKPGLPGLDGPPGLKGF) has biased composition (low complexity). Positions 716–718 (RGD) match the Cell attachment site motif. Low complexity-rich tracts occupy residues 742 to 758 (PGKD…AFGD) and 857 to 902 (PAGM…LPGL). Composition is skewed to basic and acidic residues over residues 911-929 (ERGK…EVGE) and 938-950 (DLGE…DRGL). Gly residues predominate over residues 969–978 (GPPGDGGFSG). 2 short sequence motifs (cell attachment site) span residues 980–982 (RGD) and 992–994 (RGD). The span at 998 to 1010 (DGLPGLHRGQPGI) shows a compositional bias: low complexity. Over residues 1011–1025 (DGPPGPPGPPGPPGS) the composition is skewed to pro residues. Residues 1034–1044 (FPGFPGDQGDP) are compositionally biased toward low complexity. A Cell attachment site motif is present at residues 1144-1146 (RGD). 5 stretches are compositionally biased toward pro residues: residues 1223–1235 (PGPP…PGPA), 1248–1272 (DPGP…PPGS), 1289–1304 (PGPP…PGCQ), 1340–1351 (PGPPGRKGPVGP), and 1435–1444 (APGPPGPTGD). In terms of domain architecture, Collagen IV NC1 spans 1457–1682 (GFLLVLHSQT…SRCQVCMKHS (226 aa)). Intrachain disulfides connect Cys1472-Cys1561, Cys1505-Cys1558, Cys1517-Cys1523, Cys1580-Cys1678, Cys1614-Cys1675, and Cys1626-Cys1633.

This sequence belongs to the type IV collagen family. There are six type IV collagen isoforms, alpha 1(IV)-alpha 6(IV), each of which can form a triple helix structure with 2 other chains to generate type IV collagen network. The alpha 3(IV) chain forms a triple helical protomer with alpha 4(IV) and alpha 5(IV); this triple helical structure dimerizes through NC1-NC1 domain interactions such that the alpha 3(IV), alpha 4(IV) and alpha 5(IV) chains of one protomer connect with the alpha 5(IV), alpha 4(IV) and alpha 3(IV) chains of the opposite protomer, respectively. Associates with LAMB2 at the neuromuscular junction and in GBM. In terms of processing, prolines at the third position of the tripeptide repeating unit (G-X-Y) are hydroxylated in some or all of the chains. Type IV collagens contain numerous cysteine residues which are involved in inter- and intramolecular disulfide bonding. 12 of these, located in the NC1 domain, are conserved in all known type IV collagens. Post-translationally, the trimeric structure of the NC1 domains is stabilized by covalent bonds between Lys and Met residues. Expressed in Bruch's membrane, outer plexiform layer, inner nuclear layer, inner plexiform layer, ganglion cell layer, inner limiting membrane and around the blood vessels of the retina (at protein level). Highly expressed in kidney and lung. Detected at lower levels in heart, muscle and skin.

It localises to the secreted. The protein localises to the extracellular space. It is found in the extracellular matrix. The protein resides in the basement membrane. Type IV collagen is the major structural component of glomerular basement membranes (GBM), forming a 'chicken-wire' meshwork together with laminins, proteoglycans and entactin/nidogen. The protein is Collagen alpha-4(IV) chain of Mus musculus (Mouse).